We begin with the raw amino-acid sequence, 620 residues long: Glutathione-regulated potassium-efflux system protein KefC (620 aa).

Helical transmembrane passes span 4–24 (HTLI…PIAV), 26–46 (LGLG…PWGL), 54–74 (SILH…GLEL), 90–110 (GALQ…LLGL), 114–134 (VAEL…MQAM), 149–169 (FAVL…IPLL), 178–198 (MGAF…VVLL), 218–238 (VFSA…EEVG), 270–290 (GLLL…GTLL), 294–314 (LRIV…LWLI), 327–347 (WFAV…GAAQ), and 359–379 (SLTL…VILN). Positions 399 to 518 (QPRVIIAGFG…AGVEKPERET (120 aa)) constitute an RCK N-terminal domain. Positions 597–620 (GWQGTEEGKHTGNMADEPETKPSS) are disordered.

Belongs to the monovalent cation:proton antiporter 2 (CPA2) transporter (TC 2.A.37) family. KefC subfamily. As to quaternary structure, homodimer. Interacts with the regulatory subunit KefF.

The protein resides in the cell inner membrane. Pore-forming subunit of a potassium efflux system that confers protection against electrophiles. Catalyzes K(+)/H(+) antiport. This Escherichia coli O6:K15:H31 (strain 536 / UPEC) protein is Glutathione-regulated potassium-efflux system protein KefC.